Here is a 592-residue protein sequence, read N- to C-terminus: MTFRLSRFESPLIEDDGESRASLLGYSPENELYTDVDENRESRFRRFMSFISSSPYDMFLAINEHVESIDWDSKASTIAGPLGNFFTCSLYTARLLQDSLIRPNQQKLDKKRDSFDLSRSEILRKFEYLSQVPKSGVVVTHLNWYWKFLTFLNVALQITVGFLILINLFVAYKFLIGHFQVYSLFYTKTSPRSKNVTKRSLSDLSFKSLEEVTNSSLWTMIRYMFVRKRLIIKDAPKGKYYYQLRKWTPGKFYTALFSAFSPISVIFLLVTEVSFKTALAVIGHQYILFLVLFKRYESRLDDEACLAKAHFEEINEKVIKPKTTIKTQDAMVDATTYGGGAAFFPSFTTTRSHIFQTHAVTGDIITERYNPETRNFEDVENTGRAKNYISQIQGVSHGQQVVSRSKAMNGATARPQFFSRQPSPSKIGTPSIILNYRTSPFSAPTTPTLKPVNGVQNGQSIFRNSPDPSKANSLNCDTSHLSRNNTLSRLRRNSVSPTKSGNYCSASGMRAIHKSNFGADSSVSYSMEAPSNELPFEEVARRGRHPFEITASRDLPAGRSSAVSSRHSSISPFKGNTSFAGRESLDSRPPFR.

The next 2 membrane-spanning stretches (helical) occupy residues 151–171 (FLNVALQITVGFLILINLFVA) and 255–275 (ALFSAFSPISVIFLLVTEVSF). Positions 547–592 (FEITASRDLPAGRSSAVSSRHSSISPFKGNTSFAGRESLDSRPPFR) are disordered. Residues 560 to 571 (SSAVSSRHSSIS) are compositionally biased toward low complexity.

Belongs to the NUR1 family.

It localises to the nucleus membrane. Member of a perinuclear network that controls recombination at multiple loci to maintain genome stability. Required for rDNA repeat stability. In Lachancea thermotolerans (strain ATCC 56472 / CBS 6340 / NRRL Y-8284) (Yeast), this protein is Nuclear rim protein 1 (NUR1).